The primary structure comprises 102 residues: MAKQKIRIRLKAFDHSLLDQSALKIVETAKTTGAKVAGPVPLPTEKDIVTILRAPHKYKDAREQFEIRTHKRLIDIISPSPKTVDALMRLDLPAGVDIEIKL.

The protein belongs to the universal ribosomal protein uS10 family. In terms of assembly, part of the 30S ribosomal subunit.

Functionally, involved in the binding of tRNA to the ribosomes. In Clostridium botulinum (strain ATCC 19397 / Type A), this protein is Small ribosomal subunit protein uS10.